A 331-amino-acid chain; its full sequence is L-lactate dehydrogenase A chain (331 aa).

NAD(+)-binding positions include Gly29–Lys57 and Arg98. 3 residues coordinate substrate: Arg105, Asn137, and Arg168. Residue Asn137 participates in NAD(+) binding. His192 functions as the Proton acceptor in the catalytic mechanism. Position 247 (Thr247) interacts with substrate.

This sequence belongs to the LDH/MDH superfamily. LDH family. As to quaternary structure, homotetramer.

The protein localises to the cytoplasm. It catalyses the reaction (S)-lactate + NAD(+) = pyruvate + NADH + H(+). Its pathway is fermentation; pyruvate fermentation to lactate; (S)-lactate from pyruvate: step 1/1. Its function is as follows. Interconverts simultaneously and stereospecifically pyruvate and lactate with concomitant interconversion of NADH and NAD(+). This is L-lactate dehydrogenase A chain (ldha) from Notothenia neglecta (Yellowbelly rockcod).